The following is a 261-amino-acid chain: Leucine-rich repeat-containing protein 18 (261 aa).

7 LRR repeats span residues 28–49 (GKKR…ILRL), 51–72 (DMDE…ISKF), 74–95 (NLRW…IGQM), 97–118 (SLLY…VELK), 122–144 (NIRA…GALK), 145–167 (ELHE…SKLP), and 168–189 (KLKK…EIFI).

It is found in the cytoplasm. Functionally, may be involved in the regulation of spermatogenesis and sperm maturation. This chain is Leucine-rich repeat-containing protein 18 (LRRC18), found in Homo sapiens (Human).